Consider the following 429-residue polypeptide: Cytochrome bc1 complex Rieske iron-sulfur subunit (429 aa).

The disordered stretch occupies residues 1 to 45; the sequence is MSRADDDAVGVPPTCGGRSDEEERRIVPGPNPQDGAKDGAKATAV. 3 consecutive transmembrane segments (helical) span residues 96 to 116, 137 to 157, and 207 to 227; these read VAVW…IFLF, PLYG…AVLY, and FGVG…GGLI. The Rieske domain occupies 316 to 410; sequence RNPVMLIRIK…ITIDTDGYLV (95 aa). 4 residues coordinate [2Fe-2S] cluster: Cys-353, His-355, Cys-372, and His-375. A disulfide bond links Cys-358 and Cys-374.

It belongs to the Rieske iron-sulfur protein family. As to quaternary structure, the cytochrome bc1 complex is composed of a cytochrome b (QcrB), the Rieske iron-sulfur protein (QcrA) and a diheme cytochrome c (QcrC) subunit. Requires [2Fe-2S] cluster as cofactor.

The protein resides in the cell membrane. Functionally, iron-sulfur subunit of the cytochrome bc1 complex, an essential component of the respiratory electron transport chain required for ATP synthesis. The bc1 complex catalyzes the oxidation of menaquinol and the reduction of cytochrome c in the respiratory chain. The bc1 complex operates through a Q-cycle mechanism that couples electron transfer to generation of the proton gradient that drives ATP synthesis. The polypeptide is Cytochrome bc1 complex Rieske iron-sulfur subunit (qcrA) (Mycobacterium tuberculosis (strain CDC 1551 / Oshkosh)).